Reading from the N-terminus, the 340-residue chain is PI-PLC X domain-containing protein 2 (340 aa).

A PI-PLC X-box domain is found at 42–215 (HLHNVPLSNL…KYQVLIFYHC (174 aa)). Active-site residues include His57 and His132.

As to expression, expressed at highest levels in brain, followed by stomach and small intestine. Detected at low levels in kidney, ey, thymus and slkeletal muscle.

It is found in the nucleus. It carries out the reaction a 1,2-diacyl-sn-glycero-3-phospho-(1D-myo-inositol) + H2O = 1D-myo-inositol 1-phosphate + a 1,2-diacyl-sn-glycerol + H(+). Catalyzes the hydrolysis of inositol from phosphatidylinositol (1,2-diacyl-sn-glycero-3-phospho-(1D-myo-inositol), PI). Could also hydrolyze various multi-phosphorylated derivatives of PI, such as phosphatidylinositol-4,5 bisphosphate (PIP2), releasing inositol-1,4,5-trisphosphate (IP3) and the protein kinase C activator diacylglycerol (DAG), therefore mediating cell signaling. This chain is PI-PLC X domain-containing protein 2 (Plcxd2), found in Mus musculus (Mouse).